Here is a 1050-residue protein sequence, read N- to C-terminus: DNA ligase 4 (1050 aa).

Residues 1-22 (MNTNRRSRSPDEEALEEDQHQY) form a disordered region. ATP-binding residues include Glu329, Lys331, Leu332, Arg336, Glu398, Phe438, Glu498, Lys503, Lys520, and Lys522. The N6-AMP-lysine intermediate role is filled by Lys331. A Mg(2+)-binding site is contributed by Glu398. Residue Glu498 participates in Mg(2+) binding. Over residues 691–702 (QEQERKKMEMEN) the composition is skewed to basic and acidic residues. The segment at 691–711 (QEQERKKMEMENRKRKPATKR) is disordered. 2 consecutive BRCT domains span residues 742-840 (ASKR…KENK) and 936-1049 (LRSF…EYVA).

The protein belongs to the ATP-dependent DNA ligase family. The cofactor is Mg(2+).

The protein localises to the nucleus. It catalyses the reaction ATP + (deoxyribonucleotide)n-3'-hydroxyl + 5'-phospho-(deoxyribonucleotide)m = (deoxyribonucleotide)n+m + AMP + diphosphate.. In terms of biological role, DNA ligase involved in DNA non-homologous end joining (NHEJ); required for double-strand break (DSB) repair. In Neurospora crassa (strain ATCC 24698 / 74-OR23-1A / CBS 708.71 / DSM 1257 / FGSC 987), this protein is DNA ligase 4 (mus-53).